A 421-amino-acid chain; its full sequence is Histidine--tRNA ligase (421 aa).

The protein belongs to the class-II aminoacyl-tRNA synthetase family. As to quaternary structure, homodimer.

Its subcellular location is the cytoplasm. It carries out the reaction tRNA(His) + L-histidine + ATP = L-histidyl-tRNA(His) + AMP + diphosphate + H(+). This is Histidine--tRNA ligase from Coxiella burnetii (strain CbuK_Q154) (Coxiella burnetii (strain Q154)).